The following is a 317-amino-acid chain: Dehydrogenase/reductase SDR family member 12 (317 aa).

NAD(+) is bound by residues Ser50 and Ile52. Ser175 is a binding site for substrate. NAD(+) contacts are provided by Tyr201, Lys205, and Thr234. The active-site Proton acceptor is Tyr201.

It belongs to the short-chain dehydrogenases/reductases (SDR) family.

Functionally, putative oxidoreductase. This is Dehydrogenase/reductase SDR family member 12 (DHRS12) from Bos taurus (Bovine).